The chain runs to 426 residues: Serine--tRNA ligase (426 aa).

231-233 (TSE) is an L-serine binding site. 262 to 264 (RSE) is an ATP binding site. L-serine is bound at residue E285. An ATP-binding site is contributed by 349–352 (EISS). Position 385 (S385) interacts with L-serine.

Belongs to the class-II aminoacyl-tRNA synthetase family. Type-1 seryl-tRNA synthetase subfamily. In terms of assembly, homodimer. The tRNA molecule binds across the dimer.

Its subcellular location is the cytoplasm. It catalyses the reaction tRNA(Ser) + L-serine + ATP = L-seryl-tRNA(Ser) + AMP + diphosphate + H(+). The catalysed reaction is tRNA(Sec) + L-serine + ATP = L-seryl-tRNA(Sec) + AMP + diphosphate + H(+). The protein operates within aminoacyl-tRNA biosynthesis; selenocysteinyl-tRNA(Sec) biosynthesis; L-seryl-tRNA(Sec) from L-serine and tRNA(Sec): step 1/1. In terms of biological role, catalyzes the attachment of serine to tRNA(Ser). Is also able to aminoacylate tRNA(Sec) with serine, to form the misacylated tRNA L-seryl-tRNA(Sec), which will be further converted into selenocysteinyl-tRNA(Sec). This is Serine--tRNA ligase from Legionella pneumophila (strain Paris).